The sequence spans 264 residues: 5'-nucleotidase SurE (264 aa).

4 residues coordinate a divalent metal cation: Asp10, Asp11, Ser43, and Asn99.

Belongs to the SurE nucleotidase family. A divalent metal cation is required as a cofactor.

The protein resides in the cytoplasm. The enzyme catalyses a ribonucleoside 5'-phosphate + H2O = a ribonucleoside + phosphate. In terms of biological role, nucleotidase that shows phosphatase activity on nucleoside 5'-monophosphates. The protein is 5'-nucleotidase SurE of Methanococcus maripaludis (strain C5 / ATCC BAA-1333).